A 554-amino-acid chain; its full sequence is Serine/threonine-protein phosphatase 2B catalytic subunit (554 aa).

Fe cation is bound by residues D119, H121, and D147. Positions 147 and 179 each coordinate Zn(2+). H180 serves as the catalytic Proton donor. Zn(2+) contacts are provided by H228 and H310. The segment at 411-433 (LKESAPTQHKQPAPSENENKADQ) is disordered. Polar residues predominate over residues 415–426 (APTQHKQPAPSE).

This sequence belongs to the PPP phosphatase family. PP-2B subfamily. As to quaternary structure, composed of two components (A and B), the A component is the catalytic subunit and the B component confers calcium sensitivity. Fe(3+) serves as cofactor. The cofactor is Zn(2+).

The enzyme catalyses O-phospho-L-seryl-[protein] + H2O = L-seryl-[protein] + phosphate. It catalyses the reaction O-phospho-L-threonyl-[protein] + H2O = L-threonyl-[protein] + phosphate. Its function is as follows. Calcium-dependent, calmodulin-stimulated protein phosphatase. This subunit may have a role in the calmodulin activation of calcineurin. Appears to be involved in cytokinesis, mating, transport, nuclear and spindle pole body positioning, and cell shape. This Schizosaccharomyces pombe (strain 972 / ATCC 24843) (Fission yeast) protein is Serine/threonine-protein phosphatase 2B catalytic subunit (ppb1).